Consider the following 351-residue polypeptide: Biotin synthase (351 aa).

The region spanning 44-262 (NRVQVSTLLS…LAVARIMMPK (219 aa)) is the Radical SAM core domain. [4Fe-4S] cluster is bound by residues Cys-59, Cys-63, and Cys-66. [2Fe-2S] cluster is bound by residues Cys-103, Cys-134, Cys-194, and Arg-266.

It belongs to the radical SAM superfamily. Biotin synthase family. In terms of assembly, homodimer. The cofactor is [4Fe-4S] cluster. Requires [2Fe-2S] cluster as cofactor.

It carries out the reaction (4R,5S)-dethiobiotin + (sulfur carrier)-SH + 2 reduced [2Fe-2S]-[ferredoxin] + 2 S-adenosyl-L-methionine = (sulfur carrier)-H + biotin + 2 5'-deoxyadenosine + 2 L-methionine + 2 oxidized [2Fe-2S]-[ferredoxin]. Its pathway is cofactor biosynthesis; biotin biosynthesis; biotin from 7,8-diaminononanoate: step 2/2. Its function is as follows. Catalyzes the conversion of dethiobiotin (DTB) to biotin by the insertion of a sulfur atom into dethiobiotin via a radical-based mechanism. The chain is Biotin synthase from Stutzerimonas stutzeri (strain A1501) (Pseudomonas stutzeri).